An 847-amino-acid chain; its full sequence is Beta-galactosidase 1 (847 aa).

The signal sequence occupies residues 1–32; that stretch reads MGSKPNAMKNVVAMAAVSALFLLGFLVCSVSG. Residue E190 is the Proton donor of the active site. The active-site Nucleophile is the E259. An N-linked (GlcNAc...) asparagine glycan is attached at N469. In terms of domain architecture, SUEL-type lectin spans 761–847; the sequence is KPLHPKAHLQ…KKLAVEAVCA (87 aa).

Belongs to the glycosyl hydrolase 35 family. Ubiquitous, at low levels.

It is found in the secreted. It localises to the extracellular space. Its subcellular location is the apoplast. The catalysed reaction is Hydrolysis of terminal non-reducing beta-D-galactose residues in beta-D-galactosides.. This chain is Beta-galactosidase 1 (BGAL1), found in Arabidopsis thaliana (Mouse-ear cress).